A 510-amino-acid polypeptide reads, in one-letter code: Aspartate kinase FUB3 (510 aa).

ACT domains lie at isoleucine 372–aspartate 440 and leucine 446–isoleucine 510.

This sequence belongs to the aspartokinase family.

It catalyses the reaction L-aspartate + ATP = 4-phospho-L-aspartate + ADP. The protein operates within mycotoxin biosynthesis. Aspartate kinase; part of the gene cluster that mediates the biosynthesis of fusaric acid, a mycotoxin with low to moderate toxicity to animals and humans, but with high phytotoxic properties. L-aspartate is suggested as fusaric acid amino acid precursor that is activated and further processed to O-acetyl-L-homoserine by cluster enzymes aspartate kinase FUB3 and homoserine O-acetyltransferase FUB5, as well as enzymes of the primary metabolism. The polyketide synthase (PKS) FUB1 generates the triketide trans-2-hexenal which is presumptively released by the hydrolase FUB4 and linked to the NRPS-bound amino acid precursor by NAD(P)-dependent dehydrogenase FUB6. FUB1, FUB4, and the non-canonical NRPS Fub8 may form an enzyme complex. Further processing of the NRPS-bound intermediate might be carried out by FUB6 and the sulfhydrylase FUB7, enabling a spontaneous electrocyclization to close the carbon backbone of fusaric acid. Dihydrofusaric acid is likely to be released via reduction by the thioester reductase (TR) domain of FUB8 whereupon the final oxidation to fusaric acid may (also) be performed by the FMN-dependent dehydrogenase FUB9. The chain is Aspartate kinase FUB3 from Gibberella fujikuroi (strain CBS 195.34 / IMI 58289 / NRRL A-6831) (Bakanae and foot rot disease fungus).